The primary structure comprises 462 residues: 3-ketoacyl CoA thiolase 1, peroxisomal (462 aa).

A peroxisome-targeting transit peptide spans 1 to 34; it reads MEKAIQRQRVLLEHLQPIRHHTHDHSSSLTTSIC. The Acyl-thioester intermediate role is filled by Cys-138. Catalysis depends on proton acceptor residues His-393 and Cys-425. Gly-427 contributes to the substrate binding site.

The protein belongs to the thiolase-like superfamily. Thiolase family. In terms of assembly, homodimer.

The protein localises to the peroxisome. It carries out the reaction an acyl-CoA + acetyl-CoA = a 3-oxoacyl-CoA + CoA. It functions in the pathway aromatic compound metabolism. The protein operates within lipid metabolism; fatty acid metabolism. Functionally, component of the floral volatile benzenoid/phenylpropanoid (FVBP) biosynthetic pathway. Thiolase that catalyzes the conversion of 3-oxo-3-phenylpropionyl-CoA (benzoylacetyl-CoA) to benzoyl-CoA. In Petunia hybrida (Petunia), this protein is 3-ketoacyl CoA thiolase 1, peroxisomal.